The primary structure comprises 365 residues: U1 snRNP-associated protein usp109 (365 aa).

RRM domains lie at 3–79, 86–162, and 189–259; these read TSLW…VVPE, YMLF…SVKS, and TAVY…WARP.

Component of the U1 snRNP complex.

The protein localises to the nucleus. The chain is U1 snRNP-associated protein usp109 (usp109) from Schizosaccharomyces pombe (strain 972 / ATCC 24843) (Fission yeast).